Here is a 508-residue protein sequence, read N- to C-terminus: tRNA-2-methylthio-N(6)-dimethylallyladenosine synthase (508 aa).

The MTTase N-terminal domain occupies 13–131; that stretch reads KTYEVRTYGC…LPVLLERARV (119 aa). Positions 22, 60, 94, 168, 172, and 175 each coordinate [4Fe-4S] cluster. The 232-residue stretch at 154-385 folds into the Radical SAM core domain; that stretch reads RESAYAAWVS…ALQEEISWDE (232 aa). One can recognise a TRAM domain in the interval 387 to 455; it reads KKQVGRTLEL…PHHLLAEGPV (69 aa).

The protein belongs to the methylthiotransferase family. MiaB subfamily. Monomer. Requires [4Fe-4S] cluster as cofactor.

It localises to the cytoplasm. The enzyme catalyses N(6)-dimethylallyladenosine(37) in tRNA + (sulfur carrier)-SH + AH2 + 2 S-adenosyl-L-methionine = 2-methylsulfanyl-N(6)-dimethylallyladenosine(37) in tRNA + (sulfur carrier)-H + 5'-deoxyadenosine + L-methionine + A + S-adenosyl-L-homocysteine + 2 H(+). In terms of biological role, catalyzes the methylthiolation of N6-(dimethylallyl)adenosine (i(6)A), leading to the formation of 2-methylthio-N6-(dimethylallyl)adenosine (ms(2)i(6)A) at position 37 in tRNAs that read codons beginning with uridine. This Streptomyces avermitilis (strain ATCC 31267 / DSM 46492 / JCM 5070 / NBRC 14893 / NCIMB 12804 / NRRL 8165 / MA-4680) protein is tRNA-2-methylthio-N(6)-dimethylallyladenosine synthase.